Reading from the N-terminus, the 355-residue chain is UDP-3-O-acylglucosamine N-acyltransferase (355 aa).

The Proton acceptor role is filled by H252.

This sequence belongs to the transferase hexapeptide repeat family. LpxD subfamily. As to quaternary structure, homotrimer.

The enzyme catalyses a UDP-3-O-[(3R)-3-hydroxyacyl]-alpha-D-glucosamine + a (3R)-hydroxyacyl-[ACP] = a UDP-2-N,3-O-bis[(3R)-3-hydroxyacyl]-alpha-D-glucosamine + holo-[ACP] + H(+). It participates in bacterial outer membrane biogenesis; LPS lipid A biosynthesis. In terms of biological role, catalyzes the N-acylation of UDP-3-O-acylglucosamine using 3-hydroxyacyl-ACP as the acyl donor. Is involved in the biosynthesis of lipid A, a phosphorylated glycolipid that anchors the lipopolysaccharide to the outer membrane of the cell. This is UDP-3-O-acylglucosamine N-acyltransferase from Polynucleobacter necessarius subsp. necessarius (strain STIR1).